The following is a 160-amino-acid chain: MNPRRKQRLTWVAILVIGVSVATGLMLYALSQSIDLFYTPTELVEGKGKDKQKPQVGQRMRVGGMVVEGSVERDRETLEVSFKITDIGPEVTVLYQGILPDLFREGQGIVAQGELIEPTVLKASEVLAKHDEEYMPPELAEQMKGIKHVNPNTVEKGEGQ.

The Cytoplasmic segment spans residues M1–R8. Residues L9–A29 form a helical; Signal-anchor for type II membrane protein membrane-spanning segment. Residues L30–Q160 are Periplasmic-facing. Heme-binding residues include H130 and Y134.

Belongs to the CcmE/CycJ family.

The protein localises to the cell inner membrane. Functionally, heme chaperone required for the biogenesis of c-type cytochromes. Transiently binds heme delivered by CcmC and transfers the heme to apo-cytochromes in a process facilitated by CcmF and CcmH. This chain is Cytochrome c-type biogenesis protein CcmE, found in Idiomarina loihiensis (strain ATCC BAA-735 / DSM 15497 / L2-TR).